The chain runs to 206 residues: Probable GTP-binding protein EngB (206 aa).

An EngB-type G domain is found at 8 to 195 (RDAEVVLVGR…EECLRTRFHE (188 aa)). GTP-binding positions include 16-23 (GRSNVGKS), 41-45 (GVTRQ), 60-63 (DLPG), 140-143 (NKTD), and 175-177 (ICA). Mg(2+)-binding residues include Ser23 and Thr43.

It belongs to the TRAFAC class TrmE-Era-EngA-EngB-Septin-like GTPase superfamily. EngB GTPase family. Mg(2+) serves as cofactor.

In terms of biological role, necessary for normal cell division and for the maintenance of normal septation. The protein is Probable GTP-binding protein EngB of Halorubrum lacusprofundi (strain ATCC 49239 / DSM 5036 / JCM 8891 / ACAM 34).